The sequence spans 1322 residues: Phosphoribosylformylglycinamidine synthase (1322 aa).

300-311 (GASTGAGGEIRD) is a binding site for ATP. Over residues 593-608 (QQTPQRANHTETSPTP) the composition is skewed to polar residues. The interval 593–613 (QQTPQRANHTETSPTPNTLPP) is disordered. An ATP-binding site is contributed by Ala-702. 4 residues coordinate Mg(2+): Asp-703, Glu-742, Asn-746, and Asp-915. Residue Ser-917 coordinates ATP. A Glutamine amidotransferase type-1 domain is found at 1073-1322 (VAILREQGIN…LFRNARAWVG (250 aa)). Cys-1166 functions as the Nucleophile in the catalytic mechanism. Active-site residues include His-1287 and Glu-1289.

It in the N-terminal section; belongs to the FGAMS family. As to quaternary structure, monomer.

It is found in the cytoplasm. It carries out the reaction N(2)-formyl-N(1)-(5-phospho-beta-D-ribosyl)glycinamide + L-glutamine + ATP + H2O = 2-formamido-N(1)-(5-O-phospho-beta-D-ribosyl)acetamidine + L-glutamate + ADP + phosphate + H(+). It participates in purine metabolism; IMP biosynthesis via de novo pathway; 5-amino-1-(5-phospho-D-ribosyl)imidazole from N(2)-formyl-N(1)-(5-phospho-D-ribosyl)glycinamide: step 1/2. In terms of biological role, phosphoribosylformylglycinamidine synthase involved in the purines biosynthetic pathway. Catalyzes the ATP-dependent conversion of formylglycinamide ribonucleotide (FGAR) and glutamine to yield formylglycinamidine ribonucleotide (FGAM) and glutamate. This is Phosphoribosylformylglycinamidine synthase from Xylella fastidiosa (strain 9a5c).